The sequence spans 317 residues: Ribosome production factor 2 homolog (317 aa).

One can recognise a Brix domain in the interval 28 to 240; that stretch reads KTAIFLRGNA…IRRVQPAESD (213 aa). Residues 287–317 are disordered; sequence MKGLKRSVEEREDSENEEVEIEEDVISDASE. 4 positions are modified to phosphoserine: Ser293, Ser300, Ser313, and Ser316. A compositionally biased stretch (acidic residues) spans 296-317; it reads EREDSENEEVEIEEDVISDASE.

Belongs to the RPF2 family. As to quaternary structure, component of a hexameric 5S RNP precursor complex, composed of 5S RNA, rrs1, rpf2, rpl5a/rpl5b, rpl11a/rpl11b and syo1; this complex acts as a precursor for ribosome assembly.

The protein resides in the nucleus. Its subcellular location is the nucleolus. The chain is Ribosome production factor 2 homolog from Schizosaccharomyces pombe (strain 972 / ATCC 24843) (Fission yeast).